The following is a 117-amino-acid chain: VKVPAPFAWNEDFATSYKFIDLEHRTLFNGLFALSEFNTRDQLLACKEVFVMHFRDEQGQMEKANYEHFEEHKGIHEGFLEKMGHWKAPVAQKDIRFGMEWLVNHIPAEDFKYKGKL.

The Fe cation site is built by His24, His53, Glu57, His72, His76, His105, and Asp110.

This sequence belongs to the hemerythrin family. Octamer composed of two types of chains: alpha and beta.

Hemerythrin is a respiratory protein in blood cells of certain marine worms. The oxygen-binding site in each chain contains two iron atoms. The polypeptide is Hemerythrin subunit alpha (Lingula reevii (Inarticulated brachiopod)).